The following is a 278-amino-acid chain: 4-deoxy-L-threo-5-hexosulose-uronate ketol-isomerase (278 aa).

The Zn(2+) site is built by H196, H198, E203, and H245.

Belongs to the KduI family. Zn(2+) serves as cofactor.

It catalyses the reaction 5-dehydro-4-deoxy-D-glucuronate = 3-deoxy-D-glycero-2,5-hexodiulosonate. Its pathway is glycan metabolism; pectin degradation; 2-dehydro-3-deoxy-D-gluconate from pectin: step 4/5. Catalyzes the isomerization of 5-dehydro-4-deoxy-D-glucuronate to 3-deoxy-D-glycero-2,5-hexodiulosonate. The chain is 4-deoxy-L-threo-5-hexosulose-uronate ketol-isomerase from Edwardsiella ictaluri (strain 93-146).